Consider the following 160-residue polypeptide: Large ribosomal subunit protein uL16 (160 aa).

Belongs to the universal ribosomal protein uL16 family. As to quaternary structure, part of the 50S ribosomal subunit.

In terms of biological role, binds 23S rRNA and is also seen to make contacts with the A and possibly P site tRNAs. The protein is Large ribosomal subunit protein uL16 of Prochlorococcus marinus (strain MIT 9301).